Consider the following 246-residue polypeptide: tRNA (guanine-N(1)-)-methyltransferase (246 aa).

S-adenosyl-L-methionine-binding positions include Gly-114 and 134–139 (IGDYIL).

It belongs to the RNA methyltransferase TrmD family. In terms of assembly, homodimer.

The protein localises to the cytoplasm. It catalyses the reaction guanosine(37) in tRNA + S-adenosyl-L-methionine = N(1)-methylguanosine(37) in tRNA + S-adenosyl-L-homocysteine + H(+). Specifically methylates guanosine-37 in various tRNAs. In Coxiella burnetii (strain RSA 331 / Henzerling II), this protein is tRNA (guanine-N(1)-)-methyltransferase.